Here is a 518-residue protein sequence, read N- to C-terminus: GTPase MTG2, mitochondrial (518 aa).

A mitochondrion-targeting transit peptide spans methionine 1–tyrosine 23. Residues glycine 89–isoleucine 339 enclose the Obg domain. Residues alanine 340–arginine 512 form the OBG-type G domain. GTP is bound by residues glycine 346–serine 353, aspartate 394–isoleucine 398, and asparagine 460–aspartate 463.

Belongs to the TRAFAC class OBG-HflX-like GTPase superfamily. OBG GTPase family. In terms of assembly, interacts with the mitochondrial 54S large ribosomal subunit.

It is found in the mitochondrion inner membrane. Required for mitochondrial protein synthesis. May be involved in mitochondrial ribosome biogenesis. The sequence is that of GTPase MTG2, mitochondrial (MTG2) from Saccharomyces cerevisiae (strain ATCC 204508 / S288c) (Baker's yeast).